The chain runs to 206 residues: Probable GTP-binding protein EngB (206 aa).

The EngB-type G domain occupies 24–198; that stretch reads QGREVAFAGR…HARLDEWLGL (175 aa). Residues 32-39, 59-63, 77-80, 144-147, and 177-179 each bind GTP; these read GRSNVGKS, GRTQL, DLPG, TKAD, and FSA. Positions 39 and 61 each coordinate Mg(2+).

The protein belongs to the TRAFAC class TrmE-Era-EngA-EngB-Septin-like GTPase superfamily. EngB GTPase family. Mg(2+) is required as a cofactor.

In terms of biological role, necessary for normal cell division and for the maintenance of normal septation. This is Probable GTP-binding protein EngB from Alkalilimnicola ehrlichii (strain ATCC BAA-1101 / DSM 17681 / MLHE-1).